The primary structure comprises 149 residues: MAGYGAKGIRKVGAFRSGLEDKVSKQLESKGIKFEYEEWKVPYVIPASNHTYTPDFLLPNGIFVETKGLWESDDRKKHLLIREQHPELDIRIVFSSSRTKLYKGSPTSYGEFCEKHGIKFADKLIPAEWIKEPKKEVPFDRLKRKGGKK.

In terms of assembly, homodimer.

It catalyses the reaction Endonucleolytic cleavage to 5'-phosphooligonucleotide end-products.. In terms of biological role, junction-resolving enzyme that selectively binds and cleaves four-way (Holliday) DNA junctions present after viral genomic replication. These intermediates are created during DNA repair, processing of stalled replication forks and homologous genetic recombination. Introduces two nicks on the two non-crossing strands, at 5' sides of the junction. Also participates together with gp6 in the degradation of host chromosome to provide nucleotides for phage DNA synthesis. The chain is Endonuclease I from Escherichia coli (Bacteriophage T7).